Here is a 377-residue protein sequence, read N- to C-terminus: Homoserine O-succinyltransferase (377 aa).

An AB hydrolase-1 domain is found at 45 to 356; that stretch reads NAVLVCHALN…PHGHDAFLLD (312 aa). Residue Ser-151 is the Nucleophile of the active site. Arg-221 serves as a coordination point for substrate. Residues Asp-317 and His-350 contribute to the active site. Asp-351 provides a ligand contact to substrate.

This sequence belongs to the AB hydrolase superfamily. MetX family. Homodimer.

It is found in the cytoplasm. The catalysed reaction is L-homoserine + succinyl-CoA = O-succinyl-L-homoserine + CoA. The protein operates within amino-acid biosynthesis; L-methionine biosynthesis via de novo pathway; O-succinyl-L-homoserine from L-homoserine: step 1/1. Functionally, transfers a succinyl group from succinyl-CoA to L-homoserine, forming succinyl-L-homoserine. The polypeptide is Homoserine O-succinyltransferase (Leptothrix cholodnii (strain ATCC 51168 / LMG 8142 / SP-6) (Leptothrix discophora (strain SP-6))).